Reading from the N-terminus, the 292-residue chain is Putative OX-2 membrane glycoprotein homolog (292 aa).

Positions Met1 to Ala18 are cleaved as a signal peptide. The Ig-like V-type domain maps to Pro24–Ser136. Cys42 and Cys126 are disulfide-bonded. N-linked (GlcNAc...) asparagine; by host glycosylation is found at Asn45, Asn57, Asn72, and Asn195. The Ig-like C2-type domain occupies Pro147–Thr237. A helical membrane pass occupies residues Val263–Ile283.

It is found in the host membrane. This is Putative OX-2 membrane glycoprotein homolog (U85) from Human herpesvirus 6B (strain Z29) (HHV-6 variant B).